A 274-amino-acid chain; its full sequence is NAD-dependent protein deacylase (274 aa).

The region spanning 4–274 is the Deacetylase sirtuin-type domain; the sequence is CLLPSSDMDA…GELLPKALAP (271 aa). Residue 29 to 48 participates in NAD(+) binding; it reads GAGVSAESGVPTFRGAGGLW. Residues Y73 and R76 each contribute to the substrate site. 111–114 provides a ligand contact to NAD(+); the sequence is QNID. Residue H129 is the Proton acceptor of the active site. Zn(2+) contacts are provided by C137, C140, C178, and C183. NAD(+)-binding positions include 220 to 222, 246 to 248, and C264; these read GTS and NME.

This sequence belongs to the sirtuin family. Class III subfamily. It depends on Zn(2+) as a cofactor.

It is found in the mitochondrion. The enzyme catalyses N(6)-malonyl-L-lysyl-[protein] + NAD(+) + H2O = 2''-O-malonyl-ADP-D-ribose + nicotinamide + L-lysyl-[protein]. It carries out the reaction N(6)-succinyl-L-lysyl-[protein] + NAD(+) + H2O = 2''-O-succinyl-ADP-D-ribose + nicotinamide + L-lysyl-[protein]. It catalyses the reaction N(6)-glutaryl-L-lysyl-[protein] + NAD(+) + H2O = 2''-O-glutaryl-ADP-D-ribose + nicotinamide + L-lysyl-[protein]. Functionally, NAD-dependent lysine demalonylase, desuccinylase and deglutarylase that specifically removes malonyl, succinyl and glutaryl groups on target proteins. Has weak NAD-dependent protein deacetylase activity; however this activity may not be physiologically relevant in vivo. The protein is NAD-dependent protein deacylase of Daphnia pulex (Water flea).